The primary structure comprises 502 residues: Keratin, type II cytoskeletal 8 (502 aa).

The segment at 1 to 98 is head; the sequence is MSVRSTKVTY…DPSIQQVRTE (98 aa). Phosphoserine is present on residues Ser13, Ser26, Ser37, and Ser40. Residues 99 to 134 are coil 1A; it reads EKEQIKTLNNKFASFIDKVRFLEQQNKMLETKWNLL. Residues 99 to 410 enclose the IF rod domain; it reads EKEQIKTLNN…KLLEGEESRL (312 aa). A linker 1 region spans residues 135 to 151; it reads QNQKTTRSNMDGMFEAY. Residues 152-243 are coil 1B; that stretch reads ISNLRRQLDG…QLYEEELREM (92 aa). Residues 244–267 form a linker 12 region; sequence QSQISDTSVVLSMDNNRSLDLDGI. A coil 2 region spans residues 268-406; sequence IAEVRAQYED…ATYRKLLEGE (139 aa). The tract at residues 269 to 390 is necessary for interaction with PNN; that stretch reads AEVRAQYEDV…DYQELMNVKL (122 aa). Positions 407–502 are tail; sequence ESRLESGFQN…SESSDVFSKP (96 aa). Phosphoserine is present on residues Ser425, Ser428, Ser436, and Ser444.

The protein belongs to the intermediate filament family. As to quaternary structure, heterotetramer of two type I and two type II keratins. Keratin-8 associates with keratin-18. As to expression, expressed in oocytes, eggs, embryos, liver and intestinal mucosa.

It is found in the cytoplasm. The protein resides in the nucleus. Its subcellular location is the nucleoplasm. It localises to the nucleus matrix. Together with KRT19, helps to link the contractile apparatus to dystrophin at the costameres of striated muscle. This Xenopus laevis (African clawed frog) protein is Keratin, type II cytoskeletal 8.